A 262-amino-acid polypeptide reads, in one-letter code: Transmembrane protein 106A (262 aa).

The chain crosses the membrane as a helical span at residues 95-115 (FVFLAVLICLVTSSFIVFFLF).

It belongs to the TMEM106 family. In terms of tissue distribution, expressed in renal cells (at protein level). Expressed in epithelial cells.

It localises to the cell membrane. Activates macrophages and polarizes them into M1-like macrophages through the activation of the MAPK and NF-kappaB signaling pathway. Upon activation, up-regulates the expression of CD80, CD86, CD69 and MHC II on macrophages, and induces the release of pro-inflammatory cytokines such as TNF, IL1B, IL6, CCL2 and nitric oxide. May play a role in inhibition of proliferation and migration. The sequence is that of Transmembrane protein 106A (TMEM106A) from Homo sapiens (Human).